Reading from the N-terminus, the 205-residue chain is Large ribosomal subunit protein uL13 (205 aa).

Belongs to the universal ribosomal protein uL13 family.

The polypeptide is Large ribosomal subunit protein uL13 (RpL13A) (Drosophila melanogaster (Fruit fly)).